Consider the following 570-residue polypeptide: Arginine--tRNA ligase (570 aa).

A 'HIGH' region motif is present at residues 127–137 (ANPTGPLHLGH).

Belongs to the class-I aminoacyl-tRNA synthetase family. As to quaternary structure, monomer.

It localises to the cytoplasm. The catalysed reaction is tRNA(Arg) + L-arginine + ATP = L-arginyl-tRNA(Arg) + AMP + diphosphate. The sequence is that of Arginine--tRNA ligase from Neorickettsia sennetsu (strain ATCC VR-367 / Miyayama) (Ehrlichia sennetsu).